We begin with the raw amino-acid sequence, 248 residues long: Deoxyribose-phosphate aldolase (248 aa).

Aspartate 106 (proton donor/acceptor) is an active-site residue. Lysine 168 serves as the catalytic Schiff-base intermediate with acetaldehyde. Lysine 197 (proton donor/acceptor) is an active-site residue.

It belongs to the DeoC/FbaB aldolase family. DeoC type 1 subfamily.

It is found in the cytoplasm. It carries out the reaction 2-deoxy-D-ribose 5-phosphate = D-glyceraldehyde 3-phosphate + acetaldehyde. The protein operates within carbohydrate degradation; 2-deoxy-D-ribose 1-phosphate degradation; D-glyceraldehyde 3-phosphate and acetaldehyde from 2-deoxy-alpha-D-ribose 1-phosphate: step 2/2. Functionally, catalyzes a reversible aldol reaction between acetaldehyde and D-glyceraldehyde 3-phosphate to generate 2-deoxy-D-ribose 5-phosphate. The sequence is that of Deoxyribose-phosphate aldolase from Rhizobium meliloti (strain 1021) (Ensifer meliloti).